Reading from the N-terminus, the 182-residue chain is Flightin (182 aa).

The span at 1-15 (MADEEDPWGFDDGGE) shows a compositional bias: acidic residues. Residues 1 to 76 (MADEEDPWGF…PPPPEDDGYR (76 aa)) are disordered.

Post-translationally, several forms of flightin are thought to be produced through post-translational modifications, possibly by phosphorylation. In terms of tissue distribution, found only in indirect flight muscles (IFM).

Possibly involved in the regulation of flight muscles contraction, possibly by modulating actin-myosin interaction. This chain is Flightin (fln), found in Drosophila melanogaster (Fruit fly).